The sequence spans 190 residues: Segregation and condensation protein B (190 aa).

It belongs to the ScpB family. As to quaternary structure, homodimer. Homodimerization may be required to stabilize the binding of ScpA to the Smc head domains. Component of a cohesin-like complex composed of ScpA, ScpB and the Smc homodimer, in which ScpA and ScpB bind to the head domain of Smc. The presence of the three proteins is required for the association of the complex with DNA.

Its subcellular location is the cytoplasm. Functionally, participates in chromosomal partition during cell division. May act via the formation of a condensin-like complex containing Smc and ScpA that pull DNA away from mid-cell into both cell halves. This chain is Segregation and condensation protein B, found in Alkaliphilus metalliredigens (strain QYMF).